We begin with the raw amino-acid sequence, 1323 residues long: Sister chromatid cohesion protein PDS5 homolog A-A (1323 aa).

Residues Phe-385 to Tyr-421 form an HEAT repeat. The segment at Leu-1139 to Arg-1323 is disordered. Positions Ser-1153 to Ser-1165 are enriched in low complexity. Composition is skewed to polar residues over residues Asp-1166–Glu-1176 and Leu-1210–Thr-1220. Basic and acidic residues predominate over residues Asn-1235–Asp-1246.

Interacts with the cohesin complex. Binds chromatin in a cohesin-dependent manner.

The protein localises to the nucleus. Functionally, may regulate sister chromatid cohesion during mitosis and couple it to DNA replication. The chain is Sister chromatid cohesion protein PDS5 homolog A-A (pds5a-a) from Xenopus laevis (African clawed frog).